The chain runs to 177 residues: Large ribosomal subunit protein uL6 (177 aa).

Belongs to the universal ribosomal protein uL6 family. Part of the 50S ribosomal subunit.

In terms of biological role, this protein binds to the 23S rRNA, and is important in its secondary structure. It is located near the subunit interface in the base of the L7/L12 stalk, and near the tRNA binding site of the peptidyltransferase center. The chain is Large ribosomal subunit protein uL6 from Ectopseudomonas mendocina (strain ymp) (Pseudomonas mendocina).